The chain runs to 689 residues: Glycine--tRNA ligase beta subunit (689 aa).

This sequence belongs to the class-II aminoacyl-tRNA synthetase family. In terms of assembly, tetramer of two alpha and two beta subunits.

Its subcellular location is the cytoplasm. It carries out the reaction tRNA(Gly) + glycine + ATP = glycyl-tRNA(Gly) + AMP + diphosphate. This is Glycine--tRNA ligase beta subunit from Salmonella paratyphi C (strain RKS4594).